The following is a 512-amino-acid chain: N-acetyltryptophan 6-hydroxylase ivoC (512 aa).

A helical transmembrane segment spans residues 6–26 (LVFSFPAWALLLVLTLLYTLY). A glycan (N-linked (GlcNAc...) asparagine) is linked at N118. C453 contributes to the heme binding site.

It belongs to the cytochrome P450 family. It depends on heme as a cofactor.

Its subcellular location is the membrane. It participates in pigment biosynthesis. In terms of biological role, N-acetyltryptophan 6-hydroxylase; part of the pathway that mediates the biosynthesis of the gray-brown conidiophore pigment. The first step of the pathway is performed by the nonribosomal peptide synthetase ivoA that catalyzes ATP-dependent unidirectional stereoinversion of L-tryptophan to D-tryptophan with complete conversion. While the stereoinversion is catalyzed by the epimerization (E) domain of ivoA, the terminal condensation (C) domain stereoselectively hydrolyzes D-tryptophanyl-S-phosphopantetheine thioester and thus represents a non-canonical C domain function. D-tryptophan is acetylated, probably by an endogenous acetyltransferase. N-acetyltryptophan is further 6-hydroxylated into N-acetyl-6-hydroxytryptophan (AHT) by the cytochrome P450 monooxygenase ivoC. N-acetyl-6-hydroxytryptophan is substrate of the N-acetyl-6-hydroxytryptophan oxidase ivoB to produce the gray-brown conidiophore pigment. In Emericella nidulans (strain FGSC A4 / ATCC 38163 / CBS 112.46 / NRRL 194 / M139) (Aspergillus nidulans), this protein is N-acetyltryptophan 6-hydroxylase ivoC.